A 206-amino-acid chain; its full sequence is MAATRCLRWGLSRAGVWLLPPPARCPRRALHKQKDGTEFKSIYSLDKLYPESQGSDTAWRVPNGAKQADSDIPLDRLTISYCRSSGPGGQNVNKVNSKAEVRFHLATAEWIAEPVRQKIAITHKNKINRLGELILTSESSRYQFRNLADCLQKIRDMITEASQTPKEPTKEDVKLHRIRIENMNRERLRQKRIHSAVKTSRRVDMD.

The transit peptide at 1–29 directs the protein to the mitochondrion; sequence MAATRCLRWGLSRAGVWLLPPPARCPRRA. Gln90 bears the N5-methylglutamine mark.

It belongs to the prokaryotic/mitochondrial release factor family. Mitochondrion-specific ribosomal protein mL62 subfamily. As to quaternary structure, component of the mitochondrial large ribosomal subunit (mt-LSU). Mature mammalian 55S mitochondrial ribosomes consist of a small (28S) and a large (39S) subunit. The 28S small subunit contains a 12S ribosomal RNA (12S mt-rRNA) and 30 different proteins. The 39S large subunit contains a 16S rRNA (16S mt-rRNA), a copy of mitochondrial valine transfer RNA (mt-tRNA(Val)), which plays an integral structural role, and 52 different proteins. Post-translationally, methylation of glutamine in the GGQ triplet by HEMK1. As to expression, down-regulated during the in vitro differentiation of HT29-D4 colon carcinoma cells.

The protein localises to the mitochondrion. It carries out the reaction an N-acyl-L-alpha-aminoacyl-tRNA + H2O = an N-acyl-L-amino acid + a tRNA + H(+). Functionally, essential peptidyl-tRNA hydrolase component of the mitochondrial large ribosomal subunit. Acts as a codon-independent translation release factor that has lost all stop codon specificity and directs the termination of translation in mitochondrion, possibly in case of abortive elongation. Involved in the hydrolysis of peptidyl-tRNAs that have been prematurely terminated and thus in the recycling of stalled mitochondrial ribosomes. This is Large ribosomal subunit protein mL62 from Homo sapiens (Human).